A 283-amino-acid chain; its full sequence is Polyamine aminopropyltransferase (283 aa).

Residues 2-237 (ELWYTDQHTK…GHWLFGFASK (236 aa)) enclose the PABS domain. Q31 is a binding site for S-methyl-5'-thioadenosine. Spermidine is bound by residues H62 and D86. S-methyl-5'-thioadenosine contacts are provided by residues E106 and 137–138 (EG). D155 (proton acceptor) is an active-site residue. Residue 155–158 (DCAD) participates in spermidine binding. An S-methyl-5'-thioadenosine-binding site is contributed by P162.

Belongs to the spermidine/spermine synthase family. As to quaternary structure, homodimer or homotetramer.

Its subcellular location is the cytoplasm. It carries out the reaction S-adenosyl 3-(methylsulfanyl)propylamine + putrescine = S-methyl-5'-thioadenosine + spermidine + H(+). It participates in amine and polyamine biosynthesis; spermidine biosynthesis; spermidine from putrescine: step 1/1. In terms of biological role, catalyzes the irreversible transfer of a propylamine group from the amino donor S-adenosylmethioninamine (decarboxy-AdoMet) to putrescine (1,4-diaminobutane) to yield spermidine. The chain is Polyamine aminopropyltransferase from Lachnoclostridium phytofermentans (strain ATCC 700394 / DSM 18823 / ISDg) (Clostridium phytofermentans).